A 96-amino-acid chain; its full sequence is Aspartyl/glutamyl-tRNA(Asn/Gln) amidotransferase subunit C (96 aa).

The protein belongs to the GatC family. Heterotrimer of A, B and C subunits.

It carries out the reaction L-glutamyl-tRNA(Gln) + L-glutamine + ATP + H2O = L-glutaminyl-tRNA(Gln) + L-glutamate + ADP + phosphate + H(+). It catalyses the reaction L-aspartyl-tRNA(Asn) + L-glutamine + ATP + H2O = L-asparaginyl-tRNA(Asn) + L-glutamate + ADP + phosphate + 2 H(+). Allows the formation of correctly charged Asn-tRNA(Asn) or Gln-tRNA(Gln) through the transamidation of misacylated Asp-tRNA(Asn) or Glu-tRNA(Gln) in organisms which lack either or both of asparaginyl-tRNA or glutaminyl-tRNA synthetases. The reaction takes place in the presence of glutamine and ATP through an activated phospho-Asp-tRNA(Asn) or phospho-Glu-tRNA(Gln). The protein is Aspartyl/glutamyl-tRNA(Asn/Gln) amidotransferase subunit C of Exiguobacterium sibiricum (strain DSM 17290 / CCUG 55495 / CIP 109462 / JCM 13490 / 255-15).